We begin with the raw amino-acid sequence, 223 residues long: ATP synthase subunit a 2 (223 aa).

5 consecutive transmembrane segments (helical) span residues V17 to C37, F77 to L97, K106 to V126, F173 to L193, and I195 to A215.

This sequence belongs to the ATPase A chain family. As to quaternary structure, F-type ATPases have 2 components, CF(1) - the catalytic core - and CF(0) - the membrane proton channel. CF(1) has five subunits: alpha(3), beta(3), gamma(1), delta(1), epsilon(1). CF(0) has four main subunits: a, b, b' and c.

Its subcellular location is the cell inner membrane. Key component of the proton channel; it plays a direct role in the translocation of protons across the membrane. This Bradyrhizobium sp. (strain BTAi1 / ATCC BAA-1182) protein is ATP synthase subunit a 2.